The primary structure comprises 277 residues: Sulfate transport system permease protein CysT (277 aa).

The next 7 helical transmembrane spans lie at 17 to 37, 64 to 84, 99 to 119, 136 to 156, 185 to 205, 215 to 235, and 243 to 263; these read LGTS…ALVM, LLSA…MAWI, LMDL…ASLF, VTYT…PFVV, FCKV…ALSF, VIFI…MIFV, and PAAS…LFSI. The ABC transmembrane type-1 domain occupies 60–263; it reads YKVTLLSAFV…AASLLLLFSI (204 aa).

It belongs to the binding-protein-dependent transport system permease family. CysTW subfamily. In terms of assembly, the complex is composed of two ATP-binding proteins (CysA), two transmembrane proteins (CysT and CysW) and a solute-binding protein (CysP).

It localises to the cell inner membrane. Its function is as follows. Part of the ABC transporter complex CysAWTP (TC 3.A.1.6.1) involved in sulfate/thiosulfate import. Probably responsible for the translocation of the substrate across the membrane. The polypeptide is Sulfate transport system permease protein CysT (cysU) (Escherichia coli (strain K12)).